The primary structure comprises 217 residues: Transcriptional regulator NovE (217 aa).

Residues 1-41 (MVASGRTASKGRGNGATPVRPTAGDATPVDSGQPSDTTYGG) form a disordered region.

Functionally, transcription regulator that specifically regulates expression of genes involved in the novobiocin biosynthesis pathway. Probably acts as a positive regulator of transcription. Does not bind DNA. This is Transcriptional regulator NovE (novE) from Streptomyces niveus (Streptomyces spheroides).